Consider the following 350-residue polypeptide: Arabinogalactan endo-beta-1,4-galactanase A (350 aa).

The first 16 residues, 1 to 16 (MIYPLLLSALPLLSSA), serve as a signal peptide directing secretion. A glycan (N-linked (GlcNAc...) asparagine) is linked at asparagine 128. Glutamate 152 functions as the Proton donor in the catalytic mechanism. The active-site Nucleophile is glutamate 262.

Belongs to the glycosyl hydrolase 53 family.

It localises to the secreted. The enzyme catalyses The enzyme specifically hydrolyzes (1-&gt;4)-beta-D-galactosidic linkages in type I arabinogalactans.. Functionally, endogalactanase involved in the degradation of plant cell wall polysaccharides, and more particularly of hairy regions of pectin. This chain is Arabinogalactan endo-beta-1,4-galactanase A (galA), found in Aspergillus niger.